A 101-amino-acid chain; its full sequence is Urease subunit gamma (101 aa).

Belongs to the urease gamma subunit family. In terms of assembly, heterotrimer of UreA (gamma), UreB (beta) and UreC (alpha) subunits. Three heterotrimers associate to form the active enzyme.

It localises to the cytoplasm. The enzyme catalyses urea + 2 H2O + H(+) = hydrogencarbonate + 2 NH4(+). It participates in nitrogen metabolism; urea degradation; CO(2) and NH(3) from urea (urease route): step 1/1. The sequence is that of Urease subunit gamma from Corynebacterium kroppenstedtii (strain DSM 44385 / JCM 11950 / CIP 105744 / CCUG 35717).